Reading from the N-terminus, the 274-residue chain is Undecaprenyl-diphosphatase 1 (274 aa).

Transmembrane regions (helical) follow at residues 8–28 (WLLIKYLLLGLFQGFTEPIPV), 45–65 (IEGLSFEVMVNFASLFAVIAI), 92–112 (FRISFYLLLATVPAVLAALLF), 120–140 (LKQLHVIAFALLITGMALWLI), 195–215 (FSFFLYIPISLGSGVLAISDI), 230–250 (IAFIGSFIASYVSLLWFMNIM), and 253–273 (GKLIYFALYCWLAGLIVLSLL).

Belongs to the UppP family.

It is found in the cell membrane. It carries out the reaction di-trans,octa-cis-undecaprenyl diphosphate + H2O = di-trans,octa-cis-undecaprenyl phosphate + phosphate + H(+). In terms of biological role, catalyzes the dephosphorylation of undecaprenyl diphosphate (UPP). Confers resistance to bacitracin. In Halalkalibacterium halodurans (strain ATCC BAA-125 / DSM 18197 / FERM 7344 / JCM 9153 / C-125) (Bacillus halodurans), this protein is Undecaprenyl-diphosphatase 1.